The sequence spans 704 residues: mRNA (2'-O-methyladenosine-N(6)-)-methyltransferase (704 aa).

The interval 1-33 is disordered; it reads MANENHGSPREEASLLSHSPGTSNQSQPCSPKP. The segment covering 16–29 has biased composition (polar residues); that stretch reads LSHSPGTSNQSQPC. Residue serine 30 is modified to Phosphoserine. A WW domain is found at 43–77; the sequence is ELVHAGWEKCWSRRENRPYYFNRFTNQSLWEMPVL. The disordered stretch occupies residues 88-151; that stretch reads GLNATPLPQD…PSSPSIPGTP (64 aa). The Nuclear localization signal motif lies at 109 to 113; it reads KPRKR. Serine 116 bears the Phosphoserine mark. The span at 136 to 149 shows a compositional bias: polar residues; that stretch reads PTGQSVPSSPSIPG. Threonine 152 is modified (phosphothreonine). Arginine 235 and arginine 265 together coordinate substrate. Residue 553–556 coordinates S-adenosyl-L-methionine; the sequence is NPPF. Residues glutamate 558 and 588 to 592 contribute to the substrate site; that span reads WREPP. 614–616 contributes to the S-adenosyl-L-methionine binding site; sequence FEH. A disordered region spans residues 663–704; the sequence is LSAAYRQSGRSHSSGSSSSSSSEAKDRDSGREQGPSREPHPT. The short motif at 669-684 is the Nuclear localization signal element; it reads QSGRSHSSGSSSSSSS. Low complexity predominate over residues 670-684; the sequence is SGRSHSSGSSSSSSS. The span at 685 to 704 shows a compositional bias: basic and acidic residues; sequence EAKDRDSGREQGPSREPHPT.

The protein belongs to the CAPAM family. Interacts with POLR2A; interacts with the phosphorylated C-terminal domain (CTD) of POLR2A. In terms of tissue distribution, ubiquitous.

The protein localises to the nucleus. It carries out the reaction a 5'-end (N(7)-methyl 5'-triphosphoguanosine)-(2'-O-methyladenosine) in mRNA + S-adenosyl-L-methionine = a 5'-end (N(7)-methyl 5'-triphosphoguanosine)-(N(6),2'-O-dimethyladenosine) in mRNA + S-adenosyl-L-homocysteine + H(+). With respect to regulation, cap-specific adenosine methyltransferase activity is inhibited by zinc. Cap-specific adenosine methyltransferase that catalyzes formation of N(6),2'-O-dimethyladenosine cap (m6A(m)) by methylating the adenosine at the second transcribed position of capped mRNAs. Recruited to the early elongation complex of RNA polymerase II (RNAPII) via interaction with POLR2A and mediates formation of m6A(m) co-transcriptionally. The sequence is that of mRNA (2'-O-methyladenosine-N(6)-)-methyltransferase from Homo sapiens (Human).